The sequence spans 237 residues: Small ribosomal subunit protein uS2 (237 aa).

It belongs to the universal ribosomal protein uS2 family.

In Clostridioides difficile (strain 630) (Peptoclostridium difficile), this protein is Small ribosomal subunit protein uS2.